The sequence spans 1129 residues: CRISPR-associated endonuclease Cas12b (1129 aa).

Residues 1 to 14 (MAVKSIKVKLRLDD) form a WED-I (OBD-I) domain region. A binds sgRNA region spans residues 4-9 (KSIKVK). The tract at residues 15-386 (MPEIRAGLWK…FATFTLPDAT (372 aa)) is REC1 (Helical-1)domain. 2 binds DNA protospacer adjacent motif (PAM) on target DNA regions span residues 118 to 122 (QQIAR) and 143 to 144 (GN). Residues 387–518 (AHPIWTRFDK…QSQSEARGER (132 aa)) are WED-II (OBD-II) domain. Residues 442 to 446 (SMSEQ) are binds sgRNA. The ruvC-I domain stretch occupies residues 519–628 (RPPYAAVFRL…LLKLPGETES (110 aa)). The active-site For DNase activity of RuvC domain is the Asp-570. Residues 573–574 (LR) form a binds non-target ssDNA region. The segment at 629–658 (KDLRAIREERQRTLRQLRTQLAYLRLLVRC) is bridge helix domain. Residues 659-784 (GSEDVGRRER…SFFGKVSGQV (126 aa)) are REC2 (Helical-II) domain. 5 binds sgRNA regions span residues 742–746 (RPKIR), 753–754 (VG), 792–796 (RFAIT), 800–819 (HIDH…IIME), and 835–839 (WVAKY). The tract at residues 785–900 (IRAEKGSRFA…GTMYAAFSSR (116 aa)) is ruvC-II domain. Glu-848 acts as the For DNase activity of RuvC domain in catalysis. The interval 897-900 (FSSR) is binds non-target ssDNA. 2 residues coordinate phosphate: Ser-899 and Arg-911. The nuc-I domain stretch occupies residues 901–974 (FDARTGAPGI…SAEEGDFHQI (74 aa)). The tract at residues 973 to 978 (QIHADL) is binds sgRNA. Positions 975 to 993 (HADLNAAQNLQQRLWSDFD) are ruvC-III domain. Asp-977 (for DNase activity of RuvC domain) is an active-site residue. Positions 994–1129 (ISQIRLRCDW…DSACENTGDI (136 aa)) are nuc-II domain.

Belongs to the CRISPR-associated endonuclease Cas12b family. Monomer. It depends on a divalent metal cation as a cofactor.

Functionally, CRISPR (clustered regularly interspaced short palindromic repeat), is an adaptive immune system that provides protection against mobile genetic elements (viruses, transposable elements and conjugative plasmids). CRISPR clusters contain sequences complementary to antecedent mobile elements and target invading nucleic acids. CRISPR clusters are transcribed and processed into CRISPR RNA (crRNA). In type II CRISPR systems correct processing of pre-crRNA requires a trans-encoded small RNA (tracrRNA), endogenous ribonuclease 3 (rnc) and this protein. The tracrRNA serves as a guide for ribonuclease 3-aided processing of pre-crRNA. Protein-crRNA-tracrRNA endonucleolytically cleave dsDNA target complementary to the spacer; protein is inactive in the absence of crRNA homologous to the target and tracrRNA. Recognizes a short motif in the CRISPR repeat sequences (the 5' PAM or protospacer adjacent motif, TTN in this organism) to help distinguish self versus nonself, as targets within the bacterial CRISPR locus do not have PAMs. PAM recognition is also required for catalytic activity. Cleavage results in staggered 6-8 base 5'-overhangs 14-17 and 23-24 bases downstream of the PAM (protospacer adjacent motif) on the non-target and target strands respectively. Both target and non-target strand DNA are probably independently cleaved in the same active site. In Alicyclobacillus acidoterrestris (strain ATCC 49025 / DSM 3922 / CIP 106132 / NCIMB 13137 / GD3B), this protein is CRISPR-associated endonuclease Cas12b.